Reading from the N-terminus, the 454-residue chain is Tegument protein VP16 homolog (454 aa).

It belongs to the herpesviridae tegument protein VP16 protein family. Associates with the VP16-induced complex; binding to host HCFC1 activates VP16 for association with the octamer motif-binding host protein POU2F1, to form a multiprotein-DNA complex responsible for activating transcription of the viral immediate early genes.

The protein resides in the virion tegument. It is found in the host nucleus. Its function is as follows. Transcriptional activator of immediate-early (IE) gene products (alpha genes). Acts as a key activator of lytic infection by initiating the lytic program through the assembly of the transcriptional regulatory VP16-induced complex composed of VP16 and two cellular factors, HCFC1 and POU2F1. VP16-induced complex represents a regulatory switch: when it is on, it promotes IE-gene expression and thus lytic infection, and when it is off, it limits IE-gene transcription favoring latent infection. In terms of biological role, may play a role in the aggregation of tegument proteins around nucleocapsids during virus morphogenesis. The chain is Tegument protein VP16 homolog (12) from Equine herpesvirus 4 (strain 1942) (EHV-4).